Reading from the N-terminus, the 475-residue chain is 3-hydroxyadipyl-CoA dehydrogenase (475 aa).

The protein belongs to the 3-hydroxyacyl-CoA dehydrogenase family. In terms of assembly, homotrimer.

The catalysed reaction is (3S)-3-hydroxyadipyl-CoA + NAD(+) = 3-oxoadipyl-CoA + NADH + H(+). It functions in the pathway aromatic compound metabolism; phenylacetate degradation. Catalyzes the oxidation of 3-hydroxyadipyl-CoA to yield 3-oxoadipyl-CoA. This chain is 3-hydroxyadipyl-CoA dehydrogenase (paaH), found in Escherichia coli (strain K12).